A 579-amino-acid chain; its full sequence is Thiol:disulfide interchange protein DsbD (579 aa).

Residues 1–16 (MKKLFLFFTLIFTAFA) form the signal peptide. 2 cysteine pairs are disulfide-bonded: Cys124/Cys129 and Cys193/Cys315. 8 consecutive transmembrane segments (helical) span residues 178–198 (IFGF…LPML), 230–250 (LTYT…QIAL), 254–274 (YVMI…FGLF), 296–316 (GAFG…SPCT), 337–357 (AATL…ITLF), 376–396 (FGFV…PEVW), 397–417 (EPRL…LQMS), and 420–440 (GFGY…VQPL). The 131-residue stretch at 449–579 (TTTQSAVENM…AFSNWLKALH (131 aa)) folds into the Thioredoxin domain. Residues Cys495 and Cys498 are joined by a disulfide bond.

The protein belongs to the thioredoxin family. DsbD subfamily.

Its subcellular location is the cell inner membrane. The catalysed reaction is [protein]-dithiol + NAD(+) = [protein]-disulfide + NADH + H(+). The enzyme catalyses [protein]-dithiol + NADP(+) = [protein]-disulfide + NADPH + H(+). In terms of biological role, required to facilitate the formation of correct disulfide bonds in some periplasmic proteins and for the assembly of the periplasmic c-type cytochromes. Acts by transferring electrons from cytoplasmic thioredoxin to the periplasm. This transfer involves a cascade of disulfide bond formation and reduction steps. The chain is Thiol:disulfide interchange protein DsbD from Haemophilus influenzae (strain 86-028NP).